A 387-amino-acid polypeptide reads, in one-letter code: 3-dehydroquinate synthase (387 aa).

Belongs to the archaeal-type DHQ synthase family.

It carries out the reaction 2-amino-2,3,7-trideoxy-D-lyxo-hept-6-ulosonate + NAD(+) + H2O = 3-dehydroquinate + NH4(+) + NADH + H(+). In terms of biological role, catalyzes the oxidative deamination and cyclization of 2-amino-3,7-dideoxy-D-threo-hept-6-ulosonic acid (ADH) to yield 3-dehydroquinate (DHQ), which is fed into the canonical shikimic pathway of aromatic amino acid biosynthesis. This Halobacterium salinarum (strain ATCC 29341 / DSM 671 / R1) protein is 3-dehydroquinate synthase.